A 283-amino-acid polypeptide reads, in one-letter code: Thymidylate synthase (283 aa).

DUMP contacts are provided by residues Arg-31 and 145 to 146; that span reads RR. Cys-165 functions as the Nucleophile in the catalytic mechanism. Residues 185–188, Asn-196, and 226–228 contribute to the dUMP site; these read RSAD and HIY. Residue Asp-188 participates in (6R)-5,10-methylene-5,6,7,8-tetrahydrofolate binding. Residue Ser-282 coordinates (6R)-5,10-methylene-5,6,7,8-tetrahydrofolate.

Belongs to the thymidylate synthase family. Bacterial-type ThyA subfamily. Homodimer.

It is found in the cytoplasm. The enzyme catalyses dUMP + (6R)-5,10-methylene-5,6,7,8-tetrahydrofolate = 7,8-dihydrofolate + dTMP. It functions in the pathway pyrimidine metabolism; dTTP biosynthesis. Its function is as follows. Catalyzes the reductive methylation of 2'-deoxyuridine-5'-monophosphate (dUMP) to 2'-deoxythymidine-5'-monophosphate (dTMP) while utilizing 5,10-methylenetetrahydrofolate (mTHF) as the methyl donor and reductant in the reaction, yielding dihydrofolate (DHF) as a by-product. This enzymatic reaction provides an intracellular de novo source of dTMP, an essential precursor for DNA biosynthesis. The chain is Thymidylate synthase from Symbiobacterium thermophilum (strain DSM 24528 / JCM 14929 / IAM 14863 / T).